The primary structure comprises 409 residues: Tyrosine--tRNA ligase (409 aa).

Residues 54 to 63 (PTAPDIHLGH) carry the 'HIGH' region motif. The short motif at 238-242 (KMSKS) is the 'KMSKS' region element. Lys241 lines the ATP pocket. Residues 347 to 407 (QGILRILREA…GKRKFARVKL (61 aa)) enclose the S4 RNA-binding domain.

This sequence belongs to the class-I aminoacyl-tRNA synthetase family. TyrS type 2 subfamily. Homodimer.

Its subcellular location is the cytoplasm. The enzyme catalyses tRNA(Tyr) + L-tyrosine + ATP = L-tyrosyl-tRNA(Tyr) + AMP + diphosphate + H(+). Catalyzes the attachment of tyrosine to tRNA(Tyr) in a two-step reaction: tyrosine is first activated by ATP to form Tyr-AMP and then transferred to the acceptor end of tRNA(Tyr). This is Tyrosine--tRNA ligase from Bordetella parapertussis (strain 12822 / ATCC BAA-587 / NCTC 13253).